The primary structure comprises 300 residues: ESX-5 secretion-associated protein EspG5 (300 aa).

It belongs to the EspG family. As to quaternary structure, interacts specifically with ESX-5-dependent PE/PPE proteins. Forms a 1:1:1 heterotrimeric complex with the PE25/PPE41 dimer, via PPE41. Binding of EspG5 does not cause conformational changes in the PE25/PPE41 dimer. Forms a 1:1:1 heterotrimeric complex with the PE8/PPE15 dimer, via PPE15.

The protein localises to the cytoplasm. Its function is as follows. Specific chaperone for cognate PE/PPE proteins. Plays an important role in preventing aggregation of PE/PPE dimers. The polypeptide is ESX-5 secretion-associated protein EspG5 (Mycobacterium tuberculosis (strain ATCC 25618 / H37Rv)).